We begin with the raw amino-acid sequence, 395 residues long: THAP domain-containing protein 5 (395 aa).

The THAP-type zinc finger occupies 1–84 (MPRYCAAICC…LKQTAVPTIF (84 aa)). The disordered stretch occupies residues 85–112 (SLPEDNQGKDPSKKKSQKKNLEDEKEVC). A compositionally biased stretch (basic and acidic residues) spans 90–112 (NQGKDPSKKKSQKKNLEDEKEVC). An HCFC1-binding motif (HBM) motif is present at residues 321-324 (EHSY). Positions 348-382 (LELKEQQTLGRLKSLEALIRQLKQENWLSEENVKI) form a coiled coil.

As to quaternary structure, interacts with HTRA2; under apoptotic conditions. Interacts with ABRAXAS2. Cleaved by HTRA2 during apoptosis. In terms of tissue distribution, detected in heart. Detected in brain and muscle (at protein level). Highly expressed in the heart. Also found in brain and skeletal muscle.

It localises to the nucleus. Functionally, has sequence-specific DNA-binding activity and can function as transcriptional repressor (in vitro). May be a regulator of cell cycle: THAP5 overexpression in human cell lines causes cell cycle arrest at G2/M phase. The chain is THAP domain-containing protein 5 (THAP5) from Homo sapiens (Human).